Consider the following 403-residue polypeptide: Tyrosine--tRNA ligase (403 aa).

The 'HIGH' region motif lies at 42-51 (PTAPDLHLGH). Residues 226-230 (KMSKS) carry the 'KMSKS' region motif. Lysine 229 lines the ATP pocket. The S4 RNA-binding domain occupies 336 to 396 (MPISAVLNKA…GKKAFGRITL (61 aa)).

The protein belongs to the class-I aminoacyl-tRNA synthetase family. TyrS type 2 subfamily. As to quaternary structure, homodimer.

The protein resides in the cytoplasm. It catalyses the reaction tRNA(Tyr) + L-tyrosine + ATP = L-tyrosyl-tRNA(Tyr) + AMP + diphosphate + H(+). In terms of biological role, catalyzes the attachment of tyrosine to tRNA(Tyr) in a two-step reaction: tyrosine is first activated by ATP to form Tyr-AMP and then transferred to the acceptor end of tRNA(Tyr). The chain is Tyrosine--tRNA ligase from Pseudomonas syringae pv. tomato (strain ATCC BAA-871 / DC3000).